A 377-amino-acid chain; its full sequence is Iris (377 aa).

Residues Asn11 and Asn226 are each glycosylated (N-linked (GlcNAc...) asparagine).

Belongs to the serpin family. As to expression, female saliva (at protein level). Female salivary gland (at protein level).

The protein localises to the secreted. Its function is as follows. Serine protease inhibitor with anticoagulant and immunosuppressive properties that can modulate blood feeding of ticks on vertebrate species. Strongly inhibits human leukocyte elastase (ELANE) and porcine pancreatic elastase. Moderately inhibits human tPA/tissue-type plasminogen activator (PLAT), coagulation factor Xa (F10), thrombin (F2) and trypsin. Does not inhibit human plasmin (PLG). Inhibits platelet aggregation. Inhibits the intrinsic pathway of blood coagulation in the host. Inhibits fibrinolysis in the host. Inhibits proliferation of mouse splenocytes. Decreases the number of IFN-gamma (IFNG)-producing human peripheral blood mononuclear cells (PBMCs) after stimulation with phytohemagglutinin A (PHA). Increases the number of IL10-producing human PBMCs after stimulation with lipopolysaccharides (LPS) with no significant effect on IL10 production. Inhibits production of IFNG, IL6, TNF-alpha (TNF) and CXCL8 by human PBMCs. Binds to monocyte/macrophage subpopulation of the host PBMCs. Increases both survival rate and survival time in mice with LPS-induced endotoxemic shock. This chain is Iris, found in Ixodes ricinus (Common tick).